Consider the following 319-residue polypeptide: Tetrahydromethanopterin S-methyltransferase subunit H (319 aa).

It belongs to the MtrH family. In terms of assembly, the complex is composed of 8 subunits; MtrA, MtrB, MtrC, MtrD, MtrE, MtrF, MtrG and MtrH.

It catalyses the reaction 5-methyl-5,6,7,8-tetrahydromethanopterin + coenzyme M + 2 Na(+)(in) = 5,6,7,8-tetrahydromethanopterin + methyl-coenzyme M + 2 Na(+)(out). It functions in the pathway one-carbon metabolism; methanogenesis from CO(2); methyl-coenzyme M from 5,10-methylene-5,6,7,8-tetrahydromethanopterin: step 2/2. Functionally, part of a complex that catalyzes the formation of methyl-coenzyme M and tetrahydromethanopterin from coenzyme M and methyl-tetrahydromethanopterin. This is an energy-conserving, sodium-ion translocating step. MtrH catalyzes the transfer of the methyl group from methyl-tetrahydromethanopterin to the corrinoid prosthetic group of MtrA. This is Tetrahydromethanopterin S-methyltransferase subunit H from Methanocaldococcus jannaschii (strain ATCC 43067 / DSM 2661 / JAL-1 / JCM 10045 / NBRC 100440) (Methanococcus jannaschii).